Consider the following 114-residue polypeptide: Iron-sulfur cluster insertion protein ErpA (114 aa).

Residues Cys-42, Cys-106, and Cys-108 each contribute to the iron-sulfur cluster site.

The protein belongs to the HesB/IscA family. Homodimer. Requires iron-sulfur cluster as cofactor.

In terms of biological role, required for insertion of 4Fe-4S clusters for at least IspG. The polypeptide is Iron-sulfur cluster insertion protein ErpA (Pasteurella multocida (strain Pm70)).